The chain runs to 228 residues: Phosphoribosylformylglycinamidine synthase subunit PurQ (228 aa).

A Glutamine amidotransferase type-1 domain is found at 3–226 (FAVIVFPGSN…IANWRDSYAI (224 aa)). Cysteine 87 acts as the Nucleophile in catalysis. Catalysis depends on residues histidine 195 and glutamate 197.

As to quaternary structure, part of the FGAM synthase complex composed of 1 PurL, 1 PurQ and 2 PurS subunits.

The protein resides in the cytoplasm. The catalysed reaction is N(2)-formyl-N(1)-(5-phospho-beta-D-ribosyl)glycinamide + L-glutamine + ATP + H2O = 2-formamido-N(1)-(5-O-phospho-beta-D-ribosyl)acetamidine + L-glutamate + ADP + phosphate + H(+). The enzyme catalyses L-glutamine + H2O = L-glutamate + NH4(+). It functions in the pathway purine metabolism; IMP biosynthesis via de novo pathway; 5-amino-1-(5-phospho-D-ribosyl)imidazole from N(2)-formyl-N(1)-(5-phospho-D-ribosyl)glycinamide: step 1/2. Part of the phosphoribosylformylglycinamidine synthase complex involved in the purines biosynthetic pathway. Catalyzes the ATP-dependent conversion of formylglycinamide ribonucleotide (FGAR) and glutamine to yield formylglycinamidine ribonucleotide (FGAM) and glutamate. The FGAM synthase complex is composed of three subunits. PurQ produces an ammonia molecule by converting glutamine to glutamate. PurL transfers the ammonia molecule to FGAR to form FGAM in an ATP-dependent manner. PurS interacts with PurQ and PurL and is thought to assist in the transfer of the ammonia molecule from PurQ to PurL. The sequence is that of Phosphoribosylformylglycinamidine synthase subunit PurQ from Oceanobacillus iheyensis (strain DSM 14371 / CIP 107618 / JCM 11309 / KCTC 3954 / HTE831).